Reading from the N-terminus, the 420-residue chain is UDP-N-acetyl-D-mannosamine dehydrogenase (420 aa).

Residues tyrosine 13, isoleucine 14, aspartate 33, threonine 85, and threonine 126 each coordinate NAD(+). UDP-N-acetyl-alpha-D-mannosaminouronate contacts are provided by arginine 160, valine 161, lysine 212, asparagine 216, arginine 219, histidine 250, arginine 252, and glycine 263. The active-site Proton donor/acceptor is lysine 212. Cysteine 266 acts as the Nucleophile in catalysis. 2 residues coordinate UDP-N-acetyl-alpha-D-mannosaminouronate: phenylalanine 330 and lysine 331. Position 338 (arginine 338) interacts with NAD(+). Lysine 416 serves as a coordination point for UDP-N-acetyl-alpha-D-mannosaminouronate.

The protein belongs to the UDP-glucose/GDP-mannose dehydrogenase family. WecC subfamily. As to quaternary structure, homodimer.

The catalysed reaction is UDP-N-acetyl-alpha-D-mannosamine + 2 NAD(+) + H2O = UDP-N-acetyl-alpha-D-mannosaminouronate + 2 NADH + 3 H(+). Its pathway is bacterial outer membrane biogenesis; enterobacterial common antigen biosynthesis. Catalyzes the four-electron oxidation of UDP-N-acetyl-D-mannosamine (UDP-ManNAc), reducing NAD(+) and releasing UDP-N-acetylmannosaminuronic acid (UDP-ManNAcA). The chain is UDP-N-acetyl-D-mannosamine dehydrogenase from Salmonella typhi.